The primary structure comprises 1076 residues: DNA-directed RNA polymerase subunit beta (1076 aa).

This sequence belongs to the RNA polymerase beta chain family. In plastids the minimal PEP RNA polymerase catalytic core is composed of four subunits: alpha, beta, beta', and beta''. When a (nuclear-encoded) sigma factor is associated with the core the holoenzyme is formed, which can initiate transcription.

The protein resides in the plastid. Its subcellular location is the chloroplast. It catalyses the reaction RNA(n) + a ribonucleoside 5'-triphosphate = RNA(n+1) + diphosphate. In terms of biological role, DNA-dependent RNA polymerase catalyzes the transcription of DNA into RNA using the four ribonucleoside triphosphates as substrates. In Triticum aestivum (Wheat), this protein is DNA-directed RNA polymerase subunit beta.